We begin with the raw amino-acid sequence, 357 residues long: 3-dehydroquinate synthase (357 aa).

NAD(+) contacts are provided by residues 104 to 108 (GVVGD), 128 to 129 (TT), Lys-141, and 168 to 171 (FLET). Zn(2+)-binding residues include Glu-183, His-243, and His-260.

It belongs to the sugar phosphate cyclases superfamily. Dehydroquinate synthase family. Requires NAD(+) as cofactor. It depends on Co(2+) as a cofactor. Zn(2+) serves as cofactor.

The protein resides in the cytoplasm. It carries out the reaction 7-phospho-2-dehydro-3-deoxy-D-arabino-heptonate = 3-dehydroquinate + phosphate. It participates in metabolic intermediate biosynthesis; chorismate biosynthesis; chorismate from D-erythrose 4-phosphate and phosphoenolpyruvate: step 2/7. Catalyzes the conversion of 3-deoxy-D-arabino-heptulosonate 7-phosphate (DAHP) to dehydroquinate (DHQ). The polypeptide is 3-dehydroquinate synthase (Streptococcus pyogenes serotype M6 (strain ATCC BAA-946 / MGAS10394)).